The chain runs to 859 residues: DNA mismatch repair protein MutS (859 aa).

618 to 625 contributes to the ATP binding site; sequence GPNMGGKS.

The protein belongs to the DNA mismatch repair MutS family.

In terms of biological role, this protein is involved in the repair of mismatches in DNA. It is possible that it carries out the mismatch recognition step. This protein has a weak ATPase activity. The polypeptide is DNA mismatch repair protein MutS (Shewanella halifaxensis (strain HAW-EB4)).